Here is a 374-residue protein sequence, read N- to C-terminus: Putative F-box protein At3g16590 (374 aa).

Positions 1–45 constitute an F-box domain; sequence MPTKLPLELEDEILLRVPPLSLTRFRTVCKRWNTLFNDQRFINNH.

The chain is Putative F-box protein At3g16590 from Arabidopsis thaliana (Mouse-ear cress).